A 524-amino-acid polypeptide reads, in one-letter code: Cytochrome P450 6k1 (524 aa).

Residue C464 coordinates heme.

It belongs to the cytochrome P450 family. Heme is required as a cofactor.

It localises to the endoplasmic reticulum membrane. It is found in the microsome membrane. This chain is Cytochrome P450 6k1 (CYP6K1), found in Blattella germanica (German cockroach).